A 224-amino-acid polypeptide reads, in one-letter code: 4-aminobenzoate synthase (224 aa).

Fe(2+) contacts are provided by Glu-77, His-84, Glu-138, His-169, Asp-173, and His-176.

The protein belongs to the CADD family. In terms of assembly, homodimer. Fe(2+) serves as cofactor. It depends on Mn(2+) as a cofactor.

Involved in de novo para-aminobenzoate (PABA) biosynthesis. Acts as a self-sacrificing or 'suicide' enzyme that utilizes its own active site tyrosine residue(s) as the substrate for PABA synthesis. The side chain of the tyrosine residue is released from the protein backbone via cleavage of the C(alpha)-C(beta) bond, leaving a glycine in place of the original tyrosine residue. Reaction requires O(2) and a reduced dimetal cofactor. The sequence is that of 4-aminobenzoate synthase from Chlamydia pneumoniae (Chlamydophila pneumoniae).